Reading from the N-terminus, the 92-residue chain is Large ribosomal subunit protein eL43 (92 aa).

The C4-type zinc finger occupies Cys39 to Cys60.

Belongs to the eukaryotic ribosomal protein eL43 family.

The polypeptide is Large ribosomal subunit protein eL43 (RPL43) (Candida glabrata (strain ATCC 2001 / BCRC 20586 / JCM 3761 / NBRC 0622 / NRRL Y-65 / CBS 138) (Yeast)).